Reading from the N-terminus, the 250-residue chain is Complement factor B-like protease (250 aa).

3 consecutive Sushi domains span residues 3–73, 74–133, and 136–193; these read TRCD…KCRA, VWCP…VCDD, and GDCP…QCRA. 6 disulfides stabilise this stretch: cysteine 5–cysteine 44, cysteine 30–cysteine 71, cysteine 76–cysteine 118, cysteine 104–cysteine 131, cysteine 138–cysteine 178, and cysteine 164–cysteine 191. Asparagine 115 carries N-linked (GlcNAc...) asparagine glycosylation. N-linked (GlcNAc...) asparagine glycosylation occurs at asparagine 221.

The protein belongs to the peptidase S1 family. As to expression, plasma.

Its subcellular location is the secreted. Required in both the classical and alternate pathways of the complement system. The chain is Complement factor B-like protease from Gallus gallus (Chicken).